We begin with the raw amino-acid sequence, 298 residues long: Ribosomal protein L11 methyltransferase (298 aa).

Residues threonine 139, glycine 163, aspartate 185, and asparagine 232 each coordinate S-adenosyl-L-methionine.

This sequence belongs to the methyltransferase superfamily. PrmA family.

The protein localises to the cytoplasm. The enzyme catalyses L-lysyl-[protein] + 3 S-adenosyl-L-methionine = N(6),N(6),N(6)-trimethyl-L-lysyl-[protein] + 3 S-adenosyl-L-homocysteine + 3 H(+). In terms of biological role, methylates ribosomal protein L11. This chain is Ribosomal protein L11 methyltransferase, found in Gloeothece citriformis (strain PCC 7424) (Cyanothece sp. (strain PCC 7424)).